The primary structure comprises 95 residues: Co-chaperonin GroES (95 aa).

The protein belongs to the GroES chaperonin family. In terms of assembly, heptamer of 7 subunits arranged in a ring. Interacts with the chaperonin GroEL.

It localises to the cytoplasm. Its function is as follows. Together with the chaperonin GroEL, plays an essential role in assisting protein folding. The GroEL-GroES system forms a nano-cage that allows encapsulation of the non-native substrate proteins and provides a physical environment optimized to promote and accelerate protein folding. GroES binds to the apical surface of the GroEL ring, thereby capping the opening of the GroEL channel. The chain is Co-chaperonin GroES from Chlorobium phaeobacteroides (strain BS1).